The primary structure comprises 512 residues: Protein spinster homolog 3 (512 aa).

The disordered stretch occupies residues 1-30 (MAGGMSAECPEPGPGGLQGQSPGPGRQCPP). A run of 12 helical transmembrane segments spans residues 50–70 (VLCY…GVLL), 84–104 (GLLQ…FGYL), 112–132 (ATMS…SFIS), 145–165 (IVGT…GDLF), 173–193 (VLAV…VLGS), 204–224 (WALR…ILLV), 260–280 (FVWS…LGFW), 309–329 (LIFG…GAEA), 343–365 (LICA…LAPT), 377–397 (GELL…SVVV), 411–431 (VGHI…SSVL), and 450–470 (FLCC…TALY). Residues 481–512 (PVTGTPDSNDVDSNDLERQGLLSGAGASTEEP) form a disordered region.

Belongs to the major facilitator superfamily. Spinster (TC 2.A.1.49) family.

The protein resides in the membrane. Functionally, sphingolipid transporter. This Homo sapiens (Human) protein is Protein spinster homolog 3 (SPNS3).